We begin with the raw amino-acid sequence, 1353 residues long: ABC-type transporter MYCGRDRAFT_41235 (1353 aa).

A helical membrane pass occupies residues 40 to 60; sequence ASASLWNWFFFSWLNPLIAIG. Residue Asn-121 is glycosylated (N-linked (GlcNAc...) asparagine). Transmembrane regions (helical) follow at residues 124–144, 172–192, 250–270, 271–291, 364–384, and 397–417; these read VLVW…ATIT, IGQG…GVMA, FACG…ICLG, LTIA…AILV, VALS…TYAA, and ALTL…AFGA. Residues 129–420 form the ABC transmembrane type-1 1 domain; that stretch reads WVGGAMKLFA…LPVAFGAAAD (292 aa). The ABC transporter 1 domain maps to 460–684; it reads YRVQDHSDEK…EGGQMRRVVE (225 aa). N-linked (GlcNAc...) asparagine glycosylation is present at Asn-481. 496–503 is an ATP binding site; sequence GPVGAGKS. The tract at residues 687-720 is disordered; the sequence is ASKSSAEEEEVEDGDLKDGVPSTDGGDASQTTSN. Helical transmembrane passes span 748 to 768, 796 to 816, 864 to 882, 888 to 907, 973 to 993, and 1002 to 1022; these read PAFT…GSIL, LGVS…FFIF, AFRM…VVLI, WFLL…GMYY, LSVR…LIVV, and AQGG…GFMI. Residues 756–1030 form the ABC transmembrane type-1 2 domain; the sequence is ILSMLIFQGG…MIRQSAEIEN (275 aa). The 265-residue stretch at 1070–1334 folds into the ABC transporter 2 domain; sequence IEMRDVVFTH…EGGHFRSLCS (265 aa). 1104-1111 is a binding site for ATP; the sequence is GRTGSGKS. Polar residues predominate over residues 1191-1200; sequence QSSAETLTSS. A disordered region spans residues 1191–1223; sequence QSSAETLTSSDQEKSSPDDAAISPSSHSHSQHL. The segment covering 1208–1218 has biased composition (low complexity); sequence DDAAISPSSHS.

It belongs to the ABC transporter superfamily. ABCC family. Conjugate transporter (TC 3.A.1.208) subfamily.

It localises to the cell membrane. In terms of biological role, multidrug resistance protein; part of the gene cluster 14 that mediates the biosynthesis of a ferrichrome A-like siderophors which may contribute to organismal virulence. The polypeptide is ABC-type transporter MYCGRDRAFT_41235 (Zymoseptoria tritici (strain CBS 115943 / IPO323) (Speckled leaf blotch fungus)).